The chain runs to 462 residues: ESX-1 secretion system protein EccE1 (462 aa).

Helical transmembrane passes span 9 to 29 and 34 to 54; these read FSTGHALLASALAPPCIIAFL and WWAGIALASLGVIVATVTFYG.

Belongs to the EccE family. Part of the ESX-1 / type VII secretion system (T7SS), which is composed of cytosolic and membrane components. The ESX-1 membrane complex is composed of EccB1, EccCa1, EccCb1, EccD1 and EccE1.

Its subcellular location is the cell inner membrane. Part of the ESX-1 specialized secretion system, which delivers several virulence factors to host cells during infection, including the key virulence factors EsxA (ESAT-6) and EsxB (CFP-10). The sequence is that of ESX-1 secretion system protein EccE1 from Mycobacterium tuberculosis (strain CDC 1551 / Oshkosh).